A 73-amino-acid polypeptide reads, in one-letter code: Beta-defensin 50 (73 aa).

The signal sequence occupies residues 1–23 (MKTLCFLLLTSGLLYLMVKGVGS). 2 disulfide bridges follow: cysteine 34–cysteine 63 and cysteine 46–cysteine 64.

This sequence belongs to the beta-defensin family. In terms of tissue distribution, highly expressed in prostate. Not expressed in uterus, epididymis, ovary, testis, spleen, submaxillary gland, thymus, thyroid, pancreas, smooth muscle, skeletal muscle, heart, kidney, lung, liver, eye and brain.

It is found in the secreted. Has bactericidal activity. The chain is Beta-defensin 50 (Defb50) from Mus musculus (Mouse).